The following is a 191-amino-acid chain: Molybdenum cofactor guanylyltransferase (191 aa).

Residues 13–15 (LAG), K26, D72, and D102 each bind GTP. D102 contributes to the Mg(2+) binding site.

Belongs to the MobA family. Monomer. Mg(2+) is required as a cofactor.

Its subcellular location is the cytoplasm. It carries out the reaction Mo-molybdopterin + GTP + H(+) = Mo-molybdopterin guanine dinucleotide + diphosphate. Its function is as follows. Transfers a GMP moiety from GTP to Mo-molybdopterin (Mo-MPT) cofactor (Moco or molybdenum cofactor) to form Mo-molybdopterin guanine dinucleotide (Mo-MGD) cofactor. The protein is Molybdenum cofactor guanylyltransferase of Pseudomonas entomophila (strain L48).